Consider the following 422-residue polypeptide: Hispidin-3-hydroxylase (422 aa).

Residues 6–26 traverse the membrane as a helical segment; the sequence is NSLSVLIVGAGLGGLAAAIAL. The FAD site is built by A50, R108, and D318.

Belongs to the paxM FAD-dependent monooxygenase family. Monomer. It depends on FAD as a cofactor.

It localises to the membrane. It catalyses the reaction hispidin + NADH + O2 + H(+) = 3-hydroxyhispidin + NAD(+) + H2O. The catalysed reaction is hispidin + NADPH + O2 + H(+) = 3-hydroxyhispidin + NADP(+) + H2O. It participates in secondary metabolite biosynthesis. In terms of biological role, hispidin-3-hydroxylase; part of the gene cluster that mediates the fungal bioluminescence cycle. Hydroxylates hispidin in order to produce the fungal luciferin 3-hydroxyhispidin. The fungal bioluminescence cycle begins with the hispidin synthetase that catalyzes the formation of hispidin which is further hydroxylated by the hispidin-3-hydroxylase, yielding the fungal luciferin 3-hydroxyhispidin. The luciferase then produces an endoperoxide as a high-energy intermediate with decomposition that yields oxyluciferin (also known as caffeoylpyruvate) and light emission. Oxyluciferin can be recycled to caffeic acid by caffeoylpyruvate hydrolase. The protein is Hispidin-3-hydroxylase of Neonothopanus nambi (Agaricus nambi).